Reading from the N-terminus, the 770-residue chain is tRNA(Met) cytidine acetyltransferase TmcA 2 (770 aa).

Positions 209 and 390 each coordinate ATP. The N-acetyltransferase domain maps to 458–608 (MIMLDGIHHK…YPVVVIRPIS (151 aa)). 533-535 (IAV) lines the acetyl-CoA pocket.

Belongs to the TmcA family.

It localises to the cytoplasm. It carries out the reaction cytidine(34) in elongator tRNA(Met) + acetyl-CoA + ATP + H2O = N(4)-acetylcytidine(34) in elongator tRNA(Met) + ADP + phosphate + CoA + H(+). It catalyses the reaction a cytidine in RNA + acetyl-CoA + ATP + H2O = an N(4)-acetylcytidine in RNA + ADP + phosphate + CoA + H(+). The catalysed reaction is a cytidine in tRNA + acetyl-CoA + ATP + H2O = an N(4)-acetylcytidine in tRNA + ADP + phosphate + CoA + H(+). The enzyme catalyses a cytidine in mRNA + acetyl-CoA + ATP + H2O = an N(4)-acetylcytidine in mRNA + ADP + phosphate + CoA + H(+). Catalyzes the formation of N(4)-acetylcytidine (ac(4)C) at the wobble position of tRNA(Met), by using acetyl-CoA as an acetyl donor and ATP (or GTP). Its function is as follows. Catalyzes the formation of 41 N(4)-acetylcytidine (ac(4)C) sites in RNA, almost always on the middle C of a CCG motif. Modifications are found mostly in tRNA, with small amounts found in rRNA and mRNA. This chain is tRNA(Met) cytidine acetyltransferase TmcA 2, found in Saccharolobus solfataricus (strain ATCC 35092 / DSM 1617 / JCM 11322 / P2) (Sulfolobus solfataricus).